Here is a 240-residue protein sequence, read N- to C-terminus: Phosphoribosylaminoimidazole-succinocarboxamide synthase (240 aa).

This sequence belongs to the SAICAR synthetase family.

It catalyses the reaction 5-amino-1-(5-phospho-D-ribosyl)imidazole-4-carboxylate + L-aspartate + ATP = (2S)-2-[5-amino-1-(5-phospho-beta-D-ribosyl)imidazole-4-carboxamido]succinate + ADP + phosphate + 2 H(+). Its pathway is purine metabolism; IMP biosynthesis via de novo pathway; 5-amino-1-(5-phospho-D-ribosyl)imidazole-4-carboxamide from 5-amino-1-(5-phospho-D-ribosyl)imidazole-4-carboxylate: step 1/2. The sequence is that of Phosphoribosylaminoimidazole-succinocarboxamide synthase from Acidithiobacillus ferrooxidans (strain ATCC 23270 / DSM 14882 / CIP 104768 / NCIMB 8455) (Ferrobacillus ferrooxidans (strain ATCC 23270)).